The primary structure comprises 82 residues: Chaplin-E (82 aa).

An N-terminal signal peptide occupies residues 1–27 (MKNLKKAAAVTMVAGGLIAAGAGMASA). Residues 41–81 (SPGVASGNLVQAPIHIPVNAVGNSVNVIGVLNPAFGNLGVN) form the Chaplin domain.

The protein belongs to the chaplin family. Short chaplin subfamily.

The protein localises to the cell surface. It localises to the secreted. It is found in the cell wall. The protein resides in the fimbrium. In terms of biological role, one of 8 partially redundant surface-active proteins required for efficient formation of aerial mycelium; the short chaplins assemble into a hydrophobic, amyloidal fibrillar surface layer that envelopes and protects aerial hyphae and spores, presumably anchored to the long chaplins. Chaplins have an overlapping function with the surface-active SapB peptide; chaplins are essential on minimal medium while on rich medium both chaplins and SapB are required for efficient aerial hyphae formation. Chaplins are also involved in cell attachment to a hydrophobic surface. Forms amyloid fibrils in vitro probably composed of stacked beta-sheets, at low extracellular concentrations individually restores the ability to form aerial hyphae to a chaplin-deficient strain, but does so less well than other short chaplins. A small chaplin extract (ChpD, ChpE, ChpF, ChpG and ChpH) self-assembles into 2 different amyloids; small fibrils at the air-water interface form an amphipathic membrane that resembles spore-surface structures involved in aerial hyphae formation, and hydrophilic fibrils in solution that resemble the fibers that attach cells to a hydrophobic surface. At the air-water interface the hydrophilic surface is in contact with water (probably equivalent to the peptidoglycan layer), while the hydrophobic face is exposed to the air, making the surface of the aerial hyphae hydrophobic. A minimal chaplin strain capable of forming aerial mycelium/hyphae on minimal medium contains ChpC, ChpE and ChpH. The strain also has restored rodlet formation on the hyphae surface. A second strain with ChpA, ChpD and ChpE makes slightly less robust hyphae. This essential chaplin may coordinate the assembly and/or polymerization of the other chaplins. A small chaplin extract applied to a chaplin-deficient strain restores aerial hyphae formation. The small chaplin extract forms an amyloid-like structure similar to that seen on the surface of cells without rodlets (rdlA-rdlB deletions), and is highly surface active, reducing surface tension from 72 to 26 mJ/m(2), which probably allows escape of hyphae from an aqueous environment into air. The sequence is that of Chaplin-E from Streptomyces coelicolor (strain ATCC BAA-471 / A3(2) / M145).